Consider the following 593-residue polypeptide: Proteasome-associated ATPase (593 aa).

Residues 5 to 94 (DDADSRAARW…KEEIDRLAQP (90 aa)) are a coiled coil. 281–286 (GCGKTL) serves as a coordination point for ATP. The tract at residues 574 to 593 (GKGADAGRSIETASNTGQYL) is disordered. Polar residues predominate over residues 584-593 (ETASNTGQYL). Residues 592 to 593 (YL) are docks into pockets in the proteasome alpha-ring.

It belongs to the AAA ATPase family. In terms of assembly, homohexamer. Assembles into a hexameric ring structure that caps the 20S proteasome core. Strongly interacts with the prokaryotic ubiquitin-like protein Pup through a hydrophobic interface; the interacting region of ARC lies in its N-terminal coiled-coil domain. There is one Pup binding site per ARC hexamer ring. Upon ATP-binding, the C-terminus of ARC interacts with the alpha-rings of the proteasome core, possibly by binding to the intersubunit pockets.

It functions in the pathway protein degradation; proteasomal Pup-dependent pathway. Functionally, ATPase which is responsible for recognizing, binding, unfolding and translocation of pupylated proteins into the bacterial 20S proteasome core particle. May be essential for opening the gate of the 20S proteasome via an interaction with its C-terminus, thereby allowing substrate entry and access to the site of proteolysis. Thus, the C-termini of the proteasomal ATPase may function like a 'key in a lock' to induce gate opening and therefore regulate proteolysis. The protein is Proteasome-associated ATPase of Salinispora arenicola (strain CNS-205).